Consider the following 446-residue polypeptide: 3-phosphoshikimate 1-carboxyvinyltransferase (446 aa).

3-phosphoshikimate contacts are provided by lysine 21, serine 22, and arginine 26. Lysine 21 lines the phosphoenolpyruvate pocket. Phosphoenolpyruvate contacts are provided by glycine 92 and arginine 120. Residues serine 165, glutamine 166, aspartate 308, and lysine 335 each coordinate 3-phosphoshikimate. Residue glutamine 166 participates in phosphoenolpyruvate binding. The active-site Proton acceptor is the aspartate 308. Arginine 339, arginine 380, and lysine 406 together coordinate phosphoenolpyruvate.

Belongs to the EPSP synthase family. Monomer.

It localises to the cytoplasm. The enzyme catalyses 3-phosphoshikimate + phosphoenolpyruvate = 5-O-(1-carboxyvinyl)-3-phosphoshikimate + phosphate. The protein operates within metabolic intermediate biosynthesis; chorismate biosynthesis; chorismate from D-erythrose 4-phosphate and phosphoenolpyruvate: step 6/7. Its function is as follows. Catalyzes the transfer of the enolpyruvyl moiety of phosphoenolpyruvate (PEP) to the 5-hydroxyl of shikimate-3-phosphate (S3P) to produce enolpyruvyl shikimate-3-phosphate and inorganic phosphate. The polypeptide is 3-phosphoshikimate 1-carboxyvinyltransferase (Chlamydia caviae (strain ATCC VR-813 / DSM 19441 / 03DC25 / GPIC) (Chlamydophila caviae)).